The chain runs to 71 residues: Ceratotoxin-D (71 aa).

A signal peptide spans 1-23 (MANLKAVFLICILAFIAFHCVVG). Positions 24-35 (APTAEDSIVVKR) are excised as a propeptide.

As to quaternary structure, homomer of four to six subunits.

Its subcellular location is the secreted. Female-specific peptides with potent activity against Gram-positive and Gram-negative bacteria. They have as well hemolytic activity. This is Ceratotoxin-D (CTXD) from Ceratitis capitata (Mediterranean fruit fly).